The sequence spans 435 residues: Glutamate-1-semialdehyde 2,1-aminomutase (435 aa).

Position 266 is an N6-(pyridoxal phosphate)lysine (Lys-266).

Belongs to the class-III pyridoxal-phosphate-dependent aminotransferase family. HemL subfamily. Homodimer. Pyridoxal 5'-phosphate is required as a cofactor.

The protein localises to the cytoplasm. It catalyses the reaction (S)-4-amino-5-oxopentanoate = 5-aminolevulinate. It participates in porphyrin-containing compound metabolism; protoporphyrin-IX biosynthesis; 5-aminolevulinate from L-glutamyl-tRNA(Glu): step 2/2. The sequence is that of Glutamate-1-semialdehyde 2,1-aminomutase from Coxiella burnetii (strain CbuK_Q154) (Coxiella burnetii (strain Q154)).